Consider the following 335-residue polypeptide: Biotin synthase (335 aa).

The Radical SAM core domain occupies 39–267 (TKIQVCKLIS…ASDVRLSAGR (229 aa)). Residues Cys54, Cys58, and Cys61 each coordinate [4Fe-4S] cluster. [2Fe-2S] cluster contacts are provided by Cys98, Cys130, Cys190, and Arg262.

Belongs to the radical SAM superfamily. Biotin synthase family. Homodimer. [4Fe-4S] cluster is required as a cofactor. [2Fe-2S] cluster serves as cofactor.

It carries out the reaction (4R,5S)-dethiobiotin + (sulfur carrier)-SH + 2 reduced [2Fe-2S]-[ferredoxin] + 2 S-adenosyl-L-methionine = (sulfur carrier)-H + biotin + 2 5'-deoxyadenosine + 2 L-methionine + 2 oxidized [2Fe-2S]-[ferredoxin]. It participates in cofactor biosynthesis; biotin biosynthesis; biotin from 7,8-diaminononanoate: step 2/2. Functionally, catalyzes the conversion of dethiobiotin (DTB) to biotin by the insertion of a sulfur atom into dethiobiotin via a radical-based mechanism. The chain is Biotin synthase from Nostoc punctiforme (strain ATCC 29133 / PCC 73102).